A 418-amino-acid polypeptide reads, in one-letter code: Tyrosine--tRNA ligase (418 aa).

The short motif at 42-51 (PTSPDLHLGH) is the 'HIGH' region element. The short motif at 226–230 (KMSKS) is the 'KMSKS' region element. Lys229 serves as a coordination point for ATP. The S4 RNA-binding domain occupies 339-400 (VRLVALLTKS…GKRNFIKVRL (62 aa)).

It belongs to the class-I aminoacyl-tRNA synthetase family. TyrS type 2 subfamily. In terms of assembly, homodimer.

The protein localises to the cytoplasm. The enzyme catalyses tRNA(Tyr) + L-tyrosine + ATP = L-tyrosyl-tRNA(Tyr) + AMP + diphosphate + H(+). Its function is as follows. Catalyzes the attachment of tyrosine to tRNA(Tyr) in a two-step reaction: tyrosine is first activated by ATP to form Tyr-AMP and then transferred to the acceptor end of tRNA(Tyr). This is Tyrosine--tRNA ligase from Xylella fastidiosa (strain Temecula1 / ATCC 700964).